Here is a 206-residue protein sequence, read N- to C-terminus: Ectodysplasin-A receptor-associated adapter protein (206 aa).

Disordered stretches follow at residues 1–36 (MRPLQSYKAFEDHMAQEPVEDTDPSTLSFNTSDKYP) and 52–77 (TLNCPPNSDMKNQGEENGFPDSTGDP). Polar residues-rich tracts occupy residues 24 to 33 (PSTLSFNTSD) and 52 to 62 (TLNCPPNSDMK). One can recognise a Death domain in the interval 114–190 (DVIRIKLDPC…DVEKVLRRWV (77 aa)).

As to quaternary structure, self-associates and binds to EDAR, TRAF1, TRAF2 and TRAF3.

The protein resides in the cytoplasm. Its function is as follows. Adapter protein that interacts with EDAR DEATH domain and couples the receptor to EDA signaling pathway during morphogenesis of ectodermal organs. Mediates the activation of NF-kappa-B. The chain is Ectodysplasin-A receptor-associated adapter protein (EDARADD) from Macaca fascicularis (Crab-eating macaque).